The chain runs to 151 residues: Myosin catalytic light chain, smooth muscle (151 aa).

The residue at position 1 (alanine 1) is an N-acetylalanine. EF-hand domains are found at residues 6-41 (DRIT…LGQN), 83-118 (GSYE…LGEK), and 119-151 (MSEE…LLEG).

Functionally, in molluscan muscle, calcium regulation is associated with myosin rather than with actin. Muscle myosin contains two types of light chains: the catalytic light chain, essential for ATPase activity, and the regulatory light chain, a calcium-binding protein responsible for Ca(2+) dependent binding and Ca(2+) dependent Mg-ATPase activity. The chain is Myosin catalytic light chain, smooth muscle from Halocynthia roretzi (Sea squirt).